Reading from the N-terminus, the 423-residue chain is Cell adhesion molecule CEACAM16 (423 aa).

An N-terminal signal peptide occupies residues M1–A22. N38 carries N-linked (GlcNAc...) asparagine glycosylation. The tract at residues E77 to D96 is disordered. The segment covering T84–L95 has biased composition (basic and acidic residues). Ig-like C2-type domains lie at P134–T219 and P224–V310. C155 and C202 are oxidised to a cystine. A glycan (N-linked (GlcNAc...) asparagine) is linked at N217. Cysteines 253 and 294 form a disulfide.

Belongs to the immunoglobulin superfamily. CEA family. Homooligomer; can for homodimers and homotetramers. Interacts with TECTA and TECTB.

Its subcellular location is the secreted. Its function is as follows. Required for proper hearing, plays a role in maintaining the integrity of the tectorial membrane. This is Cell adhesion molecule CEACAM16 from Rattus norvegicus (Rat).